We begin with the raw amino-acid sequence, 569 residues long: MKYIVVTGGVLSGIGKGIIASSTAMILKSMGLRVTSIKIDPYLNIDAGTMSPFEHGEVFVLDDGGEVDLDLGNYERFLDVNLGKDNNITTGKIYNLVIEKERKGQYLGKTVQVVPHITEEIQNWIERVAHLPVDGDKGTPDVCVIELGGTVGDIESMPFTEALRQFQFRVGVENFCLMHVSLVPVLGVVGEQKTKPSQQSIRELRSLGLSPDFCLCRSTQPLTEETKKKISLFCHVAPDNVIGVHDVSNIYRVPILLNQQNLPNLVLRRLQLNPKVDLSKTSPSESTPYWMASWKGLADRMDKITNESLNPIRIAMVGKYTGLTDAYLSVIKALDHASMAIERKMVIDWVEASNLETQNSSTAEYKKSWEMLRGAHGILVPGGFGDRGIEGMILTANYARTSGKPFLGICLGLQIAVIEYARNVMGWENANSEEFSASGSGKNVVVFMPEVSKTHMGGTMRLGSRDTIFTDVDNKISKLYNVDKVGQAVEERHRHRYEVNPEVVDEIHAKGLHFVGKDTTGVRMEIVELKDHDYYVACQFHPEFKSRPQRPSPPFIGLLNASLERLKKM.

In terms of domain architecture, Glutamine amidotransferase type-1 spans 313–569 (RIAMVGKYTG…NASLERLKKM (257 aa)). Residue Cys-410 is the Nucleophile of the active site. Catalysis depends on residues His-541 and Glu-543.

Belongs to the CTP synthase family.

It catalyses the reaction UTP + L-glutamine + ATP + H2O = CTP + L-glutamate + ADP + phosphate + 2 H(+). The protein operates within pyrimidine metabolism; CTP biosynthesis via de novo pathway; CTP from UDP: step 2/2. Catalyzes the ATP-dependent amination of UTP to CTP with either L-glutamine or ammonia as the source of nitrogen. The protein is CTP synthase (ctps) of Dictyostelium discoideum (Social amoeba).